Consider the following 618-residue polypeptide: DNA mismatch repair protein MutL (618 aa).

The segment covering 348-359 has biased composition (polar residues); sequence QTDTARSPTGNF. Positions 348–400 are disordered; the sequence is QTDTARSPTGNFESGEVFDYPKSQLQPSHSVSSGGASLGSRSAGGSGGAYRAT. Residues 377–388 are compositionally biased toward low complexity; it reads SVSSGGASLGSR.

Belongs to the DNA mismatch repair MutL/HexB family.

Its function is as follows. This protein is involved in the repair of mismatches in DNA. It is required for dam-dependent methyl-directed DNA mismatch repair. May act as a 'molecular matchmaker', a protein that promotes the formation of a stable complex between two or more DNA-binding proteins in an ATP-dependent manner without itself being part of a final effector complex. The protein is DNA mismatch repair protein MutL of Pseudoalteromonas translucida (strain TAC 125).